A 300-amino-acid polypeptide reads, in one-letter code: MPSLFSSLLTTLVFHILIYYQINLVTVNIIMNCFQEKQFSRENLLKMPFRMVLTGGSGSGKTIYLLSLFSTLVKKYKHIFLFTPVYNPDYDGYIWPNHINFVSSQEALEYNLIRTKSNIEKCIAVAQNHKKSAHFLLIFDDVGDKLSKCNTLIEFLNFGRHLNTSIILLCQTYRHVPILGRANITHFCSFNISISDAENMLRSMPVKGKRKDILNMLNMIQTARSNNRLAIIIEDSVFCEGELRICTDTADKDVIEQKLNIDILVSQYSHMKKNLNTILESTKTKLCNSDQSSSSKNVSS.

The protein belongs to the orthopoxvirus OPG160 protein family. Interacts with protein OPG137.

Participates in viral DNA packaging and virion morphogenesis. This Monkeypox virus protein is DNA packaging protein OPG160 (OPG160).